The following is a 270-amino-acid chain: Molybdenum storage protein subunit beta (270 aa).

As to quaternary structure, octamer consisting of 4 alpha and 4 beta chains.

Its subcellular location is the cytoplasm. In terms of biological role, intracellular storage of molybdenum. Binds polyoxomolybdates. Can bind at least 90 molybdenum atoms per protein molecule. The chain is Molybdenum storage protein subunit beta from Azotobacter vinelandii (strain DJ / ATCC BAA-1303).